The sequence spans 342 residues: tRNA N6-adenosine threonylcarbamoyltransferase (342 aa).

Fe cation contacts are provided by His111 and His115. Substrate-binding positions include 134–138, Asp167, Gly180, and Asn275; that span reads LVSGG. Position 303 (Asp303) interacts with Fe cation.

It belongs to the KAE1 / TsaD family. Fe(2+) serves as cofactor.

The protein resides in the cytoplasm. The catalysed reaction is L-threonylcarbamoyladenylate + adenosine(37) in tRNA = N(6)-L-threonylcarbamoyladenosine(37) in tRNA + AMP + H(+). In terms of biological role, required for the formation of a threonylcarbamoyl group on adenosine at position 37 (t(6)A37) in tRNAs that read codons beginning with adenine. Is involved in the transfer of the threonylcarbamoyl moiety of threonylcarbamoyl-AMP (TC-AMP) to the N6 group of A37, together with TsaE and TsaB. TsaD likely plays a direct catalytic role in this reaction. This Paraburkholderia xenovorans (strain LB400) protein is tRNA N6-adenosine threonylcarbamoyltransferase.